Reading from the N-terminus, the 383-residue chain is Opsin Rh3 (383 aa).

The Extracellular segment spans residues 1 to 57 (MESGNVSSSLFGNVSTALRPEARLSAETRLLGWNVPPEELRHIPEHWLTYPEPPESM). A glycan (N-linked (GlcNAc...) asparagine) is linked at N13. The chain crosses the membrane as a helical span at residues 58 to 82 (NYLLGTLYIFFTLMSMLGNGLVIWV). Over 83–94 (FSAAKSLRTPSN) the chain is Cytoplasmic. A helical transmembrane segment spans residues 95–119 (ILVINLAFCDFMMMVKTPIFIYNSF). The Extracellular segment spans residues 120 to 133 (HQGYALGHLGCQIF). Cysteines 130 and 207 form a disulfide. Residues 134 to 153 (GIIGSYTGIAAGATNAFIAY) form a helical membrane-spanning segment. The Cytoplasmic segment spans residues 154-171 (DRFNVITRPMEGKMTHGK). Residues 172 to 196 (AIAMIIFIYMYATPWVVACYTETWG) form a helical membrane-spanning segment. Residues 197–220 (RFVPEGYLTSCTFDYLTDNFDTRL) are Extracellular-facing. A helical membrane pass occupies residues 221–248 (FVACIFFFSFVCPTTMITYYYSQIVGHV). Residues 249 to 284 (FSHEKALRDQAKKMNVESLRSNVDKNKETAEIRIAK) lie on the Cytoplasmic side of the membrane. The helical transmembrane segment at 285 to 308 (AAITICFLFFCSWTPYGVMSLIGA) threads the bilayer. The Extracellular portion of the chain corresponds to 309-316 (FGDKTLLT). A helical membrane pass occupies residues 317 to 341 (PGATMIPACACKMVACIDPFVYAIS). K328 is subject to N6-(retinylidene)lysine. Over 342–383 (HPRYRMELQKRCPWLALNEKAPESSAVASTSTTQEPQQTTAA) the chain is Cytoplasmic. The interval 362 to 383 (APESSAVASTSTTQEPQQTTAA) is disordered. The segment covering 369–383 (ASTSTTQEPQQTTAA) has biased composition (low complexity).

Belongs to the G-protein coupled receptor 1 family. Opsin subfamily. In terms of processing, phosphorylated on some or all of the serine and threonine residues present in the C-terminal region.

The protein resides in the membrane. In terms of biological role, visual pigments are the light-absorbing molecules that mediate vision. They consist of an apoprotein, opsin, covalently linked to cis-retinal. In Drosophila melanogaster (Fruit fly), this protein is Opsin Rh3 (Rh3).